The primary structure comprises 360 residues: Phospho-N-acetylmuramoyl-pentapeptide-transferase (360 aa).

Helical transmembrane passes span Leu19 to Phe39, Thr73 to Leu93, Ser95 to Asp115, Tyr136 to Ile156, Gly173 to Leu193, Gly199 to Ser219, Ile233 to Phe253, Val263 to Val283, Leu288 to Val308, and Val338 to Lys358.

This sequence belongs to the glycosyltransferase 4 family. MraY subfamily. It depends on Mg(2+) as a cofactor.

Its subcellular location is the cell inner membrane. The catalysed reaction is UDP-N-acetyl-alpha-D-muramoyl-L-alanyl-gamma-D-glutamyl-meso-2,6-diaminopimeloyl-D-alanyl-D-alanine + di-trans,octa-cis-undecaprenyl phosphate = di-trans,octa-cis-undecaprenyl diphospho-N-acetyl-alpha-D-muramoyl-L-alanyl-D-glutamyl-meso-2,6-diaminopimeloyl-D-alanyl-D-alanine + UMP. It functions in the pathway cell wall biogenesis; peptidoglycan biosynthesis. Catalyzes the initial step of the lipid cycle reactions in the biosynthesis of the cell wall peptidoglycan: transfers peptidoglycan precursor phospho-MurNAc-pentapeptide from UDP-MurNAc-pentapeptide onto the lipid carrier undecaprenyl phosphate, yielding undecaprenyl-pyrophosphoryl-MurNAc-pentapeptide, known as lipid I. In Dichelobacter nodosus (strain VCS1703A), this protein is Phospho-N-acetylmuramoyl-pentapeptide-transferase.